Consider the following 61-residue polypeptide: Small ribosomal subunit protein eS31 (61 aa).

Zn(2+) is bound by residues cysteine 22, cysteine 25, cysteine 38, and cysteine 41. The C4-type zinc finger occupies 22-41 (CPRCGSFMAEHKDRYHCGKC).

This sequence belongs to the eukaryotic ribosomal protein eS31 family. As to quaternary structure, part of the 30S ribosomal subunit. Zn(2+) serves as cofactor.

The sequence is that of Small ribosomal subunit protein eS31 from Nanoarchaeum equitans (strain Kin4-M).